We begin with the raw amino-acid sequence, 450 residues long: Phosphoglucosamine mutase (450 aa).

Catalysis depends on serine 97, which acts as the Phosphoserine intermediate. Mg(2+) is bound by residues serine 97, aspartate 236, aspartate 238, and aspartate 240. Serine 97 carries the phosphoserine modification.

This sequence belongs to the phosphohexose mutase family. Requires Mg(2+) as cofactor. Activated by phosphorylation.

The enzyme catalyses alpha-D-glucosamine 1-phosphate = D-glucosamine 6-phosphate. Its function is as follows. Catalyzes the conversion of glucosamine-6-phosphate to glucosamine-1-phosphate. The chain is Phosphoglucosamine mutase from Prochlorococcus marinus (strain MIT 9215).